A 229-amino-acid polypeptide reads, in one-letter code: MDSKGSSQKGSRLLLLLVVSNLLLCQGVVSTPVCPNGPGNCQVSLRDLFDRAVMVSHYIHDLSSEMFNEFDKRYAQGKGFITMALNSCHTSSLPTPEDKEQAQQTHHEVLMSLILGLLRSWNDPLYHLVTEVRGMKGAPDAILSRAIEIEEENKRLLEGMEMIFGQVIPGAKETEPYPVWSGLPSLQTKDEDARYSAFYNLLHCLRRDSSKIDTYLKLLNCRIIYNNNC.

The signal sequence occupies residues Met1 to Ser30. A disulfide bond links Cys34 and Cys41. Phosphoserine is present on residues Ser56, Ser64, and Ser120. Disulfide bonds link Cys88-Cys204 and Cys221-Cys229.

It belongs to the somatotropin/prolactin family. As to quaternary structure, interacts with PRLR.

It is found in the secreted. Its function is as follows. Prolactin acts primarily on the mammary gland by promoting lactation. The chain is Prolactin (PRL) from Bos taurus (Bovine).